Reading from the N-terminus, the 209-residue chain is Large ribosomal subunit protein uL3 (209 aa).

Positions 122–151 are disordered; that stretch reads AIKRHGQSRGPMSHGSRYHRRPGSMGPVDP.

The protein belongs to the universal ribosomal protein uL3 family. Part of the 50S ribosomal subunit. Forms a cluster with proteins L14 and L19.

Functionally, one of the primary rRNA binding proteins, it binds directly near the 3'-end of the 23S rRNA, where it nucleates assembly of the 50S subunit. In Bacillus velezensis (strain DSM 23117 / BGSC 10A6 / LMG 26770 / FZB42) (Bacillus amyloliquefaciens subsp. plantarum), this protein is Large ribosomal subunit protein uL3.